Consider the following 206-residue polypeptide: Halorhodopsin (206 aa).

A helical transmembrane segment spans residues 1–15 (IALAGLSILLFVYMG). The Cytoplasmic segment spans residues 16–21 (RNVEDP). The helical transmembrane segment at 22–45 (RAQLIFVATLMVPLVSISSYTGLV) threads the bilayer. Residues 46–75 (SGLTVGFLEMPAGHALAGMGAGPEGGVFTP) are Extracellular-facing. Residues 76 to 97 (WGRYLTWAFSTPMILIALGLLA) form a helical membrane-spanning segment. Topologically, residues 98–100 (GSN) are cytoplasmic. A helical transmembrane segment spans residues 101–124 (MSKLFTAVVADVGMCITGLAAALT). At 125 to 127 (TSS) the chain is on the extracellular side. A helical membrane pass occupies residues 128–150 (YLLRWVWYGISCAFFVVVLYILL). Residues 151 to 162 (AEWAKDAEVAGT) lie on the Cytoplasmic side of the membrane. Residues 163 to 186 (ADIFNTLKVLTVVLWLGYPIFWAL) form a helical membrane-spanning segment. Residues 187 to 195 (GAEGLAVLD) lie on the Extracellular side of the membrane. A helical transmembrane segment spans residues 196-206 (IAITSWAYSGM).

Belongs to the archaeal/bacterial/fungal opsin family.

The protein resides in the cell membrane. Functionally, light-driven chloride pump. The sequence is that of Halorhodopsin (hop) from Halobacterium halobium (strain mex).